Reading from the N-terminus, the 59-residue chain is UPF0391 membrane protein lpp2589 (59 aa).

The next 2 membrane-spanning stretches (helical) occupy residues 5–25 and 30–50; these read ALIF…GIAV and IAKI…IMGL.

The protein belongs to the UPF0391 family.

It is found in the cell membrane. In Legionella pneumophila (strain Paris), this protein is UPF0391 membrane protein lpp2589.